The sequence spans 230 residues: uncharacterized protein (230 aa).

7 helical membrane passes run 8–28 (SLILTALIGGIPSSTAVTMAF), 45–65 (SIILSWLVMFFRVIFYTFIIF), 72–92 (LVLLLLPYFALLLMFAIFLYL), 109–129 (PFSLSQAFTFGLIYSTISVIS), 141–161 (IYVLSFLSGIMDIDAITLLLA), 176–196 (MGILLAVMSNNLFKSGYAIIF), and 203–223 (IYFLFVALFTLIYTTTLLILF).

The protein to P.aeruginosa PA0043 and M.thermoautotrophicum MTH1451.

Its subcellular location is the cell membrane. This is an uncharacterized protein from Aquifex aeolicus (strain VF5).